The primary structure comprises 412 residues: MAGKAAAPGTAVLLVTANVGSLFDDPENLQKNWLREFYQVVHTHKPHFMALHCQEFGGKNYEASMSHVDKFVKELLSSDAMKEYNRARVYLDENYKSQEHFTALGSFYFLHESLKNIYQFDFKAKKYRKVAGKEIYSDTLESTPMLEKEKFPQDYFPECKWSRKGFIRTRWCIADCAFDLVNIHLFHDASNLVAWETSPSVYSGIRHKALGYVLDRIIDQRFEKVSYFVFGDFNFRLDSKSVVETLCTKATMQTVRAADTNEVVKLIFRESDNDRKVMLQLEKKLFDYFNQEVFRDNNGTALLEFDKELSVFKDRLYELDISFPPSYPYSEDARQGEQYMNTRCPAWCDRILMSPSAKELVLRSESEEKVVTYDHIGPNVCMGDHKPVFLAFRIMPGAGKPHAHVHKCCVVQ.

Cys-409 carries S-farnesyl cysteine lipidation. Positions 410-412 (VVQ) are cleaved as a propeptide — removed in mature form.

The protein belongs to the inositol 1,4,5-trisphosphate 5-phosphatase type I family. Interacts with TASOR. Isoprenylation at Cys-409 is required for localization at the membrane. In terms of tissue distribution, predominantly expressed in heart, brain, and skeletal muscle. In brain; high level in Purkinje cells.

The protein resides in the cell membrane. It is found in the cell projection. It localises to the dendrite. It carries out the reaction 1D-myo-inositol 1,4,5-trisphosphate + H2O = 1D-myo-inositol 1,4-bisphosphate + phosphate. It catalyses the reaction 1D-myo-inositol 1,3,4,5-tetrakisphosphate + H2O = 1D-myo-inositol 1,3,4-trisphosphate + phosphate. Phosphatase that specifically hydrolyzes the 5-phosphate of inositol 1,4,5-trisphosphate to inositol 1,4-bisphosphate, and inositol 1,3,4,5-tetrasphosphate to inositol 1,3,4-trisphosphate. Plays a crucial role in the survival of cerebellar Purkinje cells. This chain is Inositol polyphosphate-5-phosphatase A, found in Homo sapiens (Human).